Here is a 505-residue protein sequence, read N- to C-terminus: Maturase K (505 aa).

The protein belongs to the intron maturase 2 family. MatK subfamily.

Its subcellular location is the plastid. It is found in the chloroplast. Usually encoded in the trnK tRNA gene intron. Probably assists in splicing its own and other chloroplast group II introns. The sequence is that of Maturase K from Dioon edule (Virgin's palm).